The following is a 316-amino-acid chain: UPF0324 membrane protein SO_4708 (316 aa).

The next 9 helical transmembrane spans lie at 61–80 (LLSY…AAIE), 85–107 (NLGL…TRAL), 114–136 (GHLI…APAV), 146–168 (ALAC…GHLL), 175–197 (FGVW…SAYG), 207–226 (IKLA…ALIF), 233–252 (LNLP…AHWL), 262–281 (LFMV…GAGI), and 293–315 (PLLL…ILYF).

It belongs to the UPF0324 family.

It is found in the cell membrane. The sequence is that of UPF0324 membrane protein SO_4708 from Shewanella oneidensis (strain ATCC 700550 / JCM 31522 / CIP 106686 / LMG 19005 / NCIMB 14063 / MR-1).